We begin with the raw amino-acid sequence, 377 residues long: UDP-N-acetylglucosamine 2-epimerase (377 aa).

His-212 is an active-site residue.

Belongs to the UDP-N-acetylglucosamine 2-epimerase family. As to quaternary structure, homodimer.

The catalysed reaction is UDP-N-acetyl-alpha-D-glucosamine + H2O = aldehydo-N-acetyl-D-mannosamine + UDP + H(+). In terms of biological role, catalyzes the conversion of UDP-N-acetylglucosamine (UDP-GlcNAc) to UDP and N-acetyl-D-mannosamine (ManNAc). In Neisseria meningitidis serogroup B (strain ATCC BAA-335 / MC58), this protein is UDP-N-acetylglucosamine 2-epimerase (siaA).